Consider the following 395-residue polypeptide: Elongation factor Tu (395 aa).

Residues 10-204 (KPHVNIGTIG…AVDEYIPTPQ (195 aa)) form the tr-type G domain. Residues 19-26 (GHVDHGKT) are G1. A GTP-binding site is contributed by 19–26 (GHVDHGKT). Thr-26 is a binding site for Mg(2+). A G2 region spans residues 60 to 64 (GITIS). A G3 region spans residues 81-84 (DCPG). GTP contacts are provided by residues 81-85 (DCPGH) and 136-139 (NKCD). The segment at 136 to 139 (NKCD) is G4. A G5 region spans residues 174 to 176 (SAL).

It belongs to the TRAFAC class translation factor GTPase superfamily. Classic translation factor GTPase family. EF-Tu/EF-1A subfamily. Monomer.

It localises to the cytoplasm. It catalyses the reaction GTP + H2O = GDP + phosphate + H(+). Functionally, GTP hydrolase that promotes the GTP-dependent binding of aminoacyl-tRNA to the A-site of ribosomes during protein biosynthesis. The polypeptide is Elongation factor Tu (Geobacillus stearothermophilus (Bacillus stearothermophilus)).